Here is a 542-residue protein sequence, read N- to C-terminus: Glutamyl-tRNA(Gln) amidotransferase subunit B, mitochondrial (542 aa).

The protein belongs to the GatB/GatE family. GatB subfamily. Subunit of the heterotrimeric GatFAB amidotransferase (AdT) complex, composed of A, B and F subunits.

The protein localises to the mitochondrion. The enzyme catalyses L-glutamyl-tRNA(Gln) + L-glutamine + ATP + H2O = L-glutaminyl-tRNA(Gln) + L-glutamate + ADP + phosphate + H(+). Allows the formation of correctly charged Gln-tRNA(Gln) through the transamidation of misacylated Glu-tRNA(Gln) in the mitochondria. The reaction takes place in the presence of glutamine and ATP through an activated gamma-phospho-Glu-tRNA(Gln). The sequence is that of Glutamyl-tRNA(Gln) amidotransferase subunit B, mitochondrial from Candida glabrata (strain ATCC 2001 / BCRC 20586 / JCM 3761 / NBRC 0622 / NRRL Y-65 / CBS 138) (Yeast).